The chain runs to 197 residues: Adenylate kinase (197 aa).

Glycine 16–threonine 21 provides a ligand contact to ATP. The NMP stretch occupies residues serine 36–valine 65. Residues threonine 37, arginine 42, histidine 63–valine 65, glycine 90–arginine 93, and glutamine 97 contribute to the AMP site. An LID region spans residues glutamate 131 to aspartate 147. Arginine 132 is a binding site for ATP. Arginine 144 and arginine 155 together coordinate AMP. Glycine 183 provides a ligand contact to ATP.

It belongs to the adenylate kinase family. As to quaternary structure, monomer.

Its subcellular location is the cytoplasm. It carries out the reaction AMP + ATP = 2 ADP. Its pathway is purine metabolism; AMP biosynthesis via salvage pathway; AMP from ADP: step 1/1. Catalyzes the reversible transfer of the terminal phosphate group between ATP and AMP. Plays an important role in cellular energy homeostasis and in adenine nucleotide metabolism. This Deinococcus deserti (strain DSM 17065 / CIP 109153 / LMG 22923 / VCD115) protein is Adenylate kinase.